The sequence spans 114 residues: MRFFATLVLALPALAMATAVPRDVNGGTPPKSCSSGPVYCCNKTEDHLDKGTTALLGLLNIKIGDLKDLVGLNCSPLSVIGVGGNSCSAQTVCCTNTYQHGLVNVGCTPINIGL.

The N-terminal stretch at 1–17 is a signal peptide; sequence MRFFATLVLALPALAMA. Disulfide bonds link C33–C93, C40–C87, C41–C74, and C94–C107. N42 carries an N-linked (GlcNAc...) asparagine glycan.

Belongs to the fungal hydrophobin family. Self-assembles to form functional amyloid fibrils called rodlets. Self-assembly into fibrillar rodlets occurs spontaneously at hydrophobic:hydrophilic interfaces and the rodlets further associate laterally to form amphipathic monolayers.

It is found in the secreted. The protein localises to the cell wall. Aerial growth, conidiation, and dispersal of filamentous fungi in the environment rely upon a capability of their secreting small amphipathic proteins called hydrophobins (HPBs) with low sequence identity. Class I can self-assemble into an outermost layer of rodlet bundles on aerial cell surfaces, conferring cellular hydrophobicity that supports fungal growth, development and dispersal; whereas Class II form highly ordered films at water-air interfaces through intermolecular interactions but contribute nothing to the rodlet structure. In Schizophyllum commune (strain H4-8 / FGSC 9210) (Split gill fungus), this protein is Class I hydrophobin SC16.